Consider the following 352-residue polypeptide: MVFRIASSPYTHNQRQTSRIMLLVVIAALPGIAAQTWFFGWGTLFQIVLAAITALVAEAIVLRLRKQSVASHLQDYSALLTGLLLAVSIPPLAPWWMVVLGTGFAIIIAKQLYGGLGQTPFNPAMIGYVVLLISFPVQMTSWLPPYEIAATTPDMLDTLRMIFTGHTASGGDMTLLRIGIDGISQATPLDTFKTSLRAGHSVEQIMQYPIYSGALAGVGWQWVNLAWLVGGVFLLWQKAIRWHIPVSFLLTLALCAALGWLFSPATLASPQLHLLSGATMLGAFFILTDPVTASTTNRGRLIFGALAGVLVWLIRSFGGYPDGVAFAVLLANITVPLIDYYTRPRVYGHRKG.

4 helical membrane-spanning segments follow: residues 20–40 (IMLLVVIAALPGIAAQTWFFG), 42–62 (GTLFQIVLAAITALVAEAIVL), 69–91 (VASHLQDYSALLTGLLLAVSIPP), and 123–143 (PAMIGYVVLLISFPVQMTSWL). An FMN phosphoryl threonine modification is found at Thr187. The next 5 membrane-spanning stretches (helical) occupy residues 215 to 235 (LAGVGWQWVNLAWLVGGVFLL), 242 to 262 (WHIPVSFLLTLALCAALGWLF), 267 to 287 (LASPQLHLLSGATMLGAFFIL), 301 to 321 (LIFGALAGVLVWLIRSFGGYP), and 322 to 342 (DGVAFAVLLANITVPLIDYYT).

It belongs to the NqrB/RnfD family. As to quaternary structure, the complex is composed of six subunits: RsxA, RsxB, RsxC, RsxD, RsxE and RsxG. It depends on FMN as a cofactor.

Its subcellular location is the cell inner membrane. Its function is as follows. Part of a membrane-bound complex that couples electron transfer with translocation of ions across the membrane. Required to maintain the reduced state of SoxR. This chain is Ion-translocating oxidoreductase complex subunit D, found in Salmonella dublin (strain CT_02021853).